A 161-amino-acid polypeptide reads, in one-letter code: uncharacterized protein (161 aa).

This is an uncharacterized protein from Mycobacterium tuberculosis (strain CDC 1551 / Oshkosh).